The following is a 181-amino-acid chain: NADH-quinone oxidoreductase subunit B (181 aa).

Positions 60, 61, 125, and 155 each coordinate [4Fe-4S] cluster.

Belongs to the complex I 20 kDa subunit family. NDH-1 is composed of 14 different subunits. Subunits NuoB, C, D, E, F, and G constitute the peripheral sector of the complex. It depends on [4Fe-4S] cluster as a cofactor.

Its subcellular location is the cell inner membrane. It carries out the reaction a quinone + NADH + 5 H(+)(in) = a quinol + NAD(+) + 4 H(+)(out). Its function is as follows. NDH-1 shuttles electrons from NADH, via FMN and iron-sulfur (Fe-S) centers, to quinones in the respiratory chain. Couples the redox reaction to proton translocation (for every two electrons transferred, four hydrogen ions are translocated across the cytoplasmic membrane), and thus conserves the redox energy in a proton gradient. This is NADH-quinone oxidoreductase subunit B from Novosphingobium aromaticivorans (strain ATCC 700278 / DSM 12444 / CCUG 56034 / CIP 105152 / NBRC 16084 / F199).